The sequence spans 645 residues: DNA mismatch repair protein MutL (645 aa).

This sequence belongs to the DNA mismatch repair MutL/HexB family.

Functionally, this protein is involved in the repair of mismatches in DNA. It is required for dam-dependent methyl-directed DNA mismatch repair. May act as a 'molecular matchmaker', a protein that promotes the formation of a stable complex between two or more DNA-binding proteins in an ATP-dependent manner without itself being part of a final effector complex. This is DNA mismatch repair protein MutL from Pediococcus pentosaceus (strain ATCC 25745 / CCUG 21536 / LMG 10740 / 183-1w).